Here is a 406-residue protein sequence, read N- to C-terminus: Kelch domain-containing protein 1 (406 aa).

6 Kelch repeats span residues 24-76, 80-134, 135-181, 208-258, 260-307, and 311-361; these read FLYV…CGAC, RLYV…VYKD, RLIY…TKTR, KGYV…AITD, KLFL…ACLG, and EIMV…LKSQ.

As to quaternary structure, component of a CRL5 E3 ubiquitin-protein ligase complex, also named ECS (Elongin BC-CUL2/5-SOCS-box protein) complex, composed of CUL5, Elongin BC (ELOB and ELOC), RBX1 and substrate-specific adapter KLHDC1.

The protein localises to the cytoplasm. The protein resides in the cytosol. The protein operates within protein modification; protein ubiquitination. Functionally, substrate-recognition component of a Cul5-RING (CRL5) E3 ubiquitin-protein ligase complex of the DesCEND (destruction via C-end degrons) pathway, which recognizes a C-degron located at the extreme C terminus of target proteins, leading to their ubiquitination and degradation. The C-degron recognized by the DesCEND pathway is usually a motif of less than ten residues and can be present in full-length proteins, truncated proteins or proteolytically cleaved forms. The CRL5(KLHDC1) complex mediates ubiquitination and degradation of truncated SELENOS selenoprotein produced by failed UGA/Sec decoding, which ends with a glycine. The polypeptide is Kelch domain-containing protein 1 (Mus musculus (Mouse)).